The chain runs to 197 residues: Interleukin-17C (197 aa).

The N-terminal stretch at 1–18 (MTLLPGLLFLTWLHTCLA) is a signal peptide. 2 cysteine pairs are disulfide-bonded: C129/C189 and C134/C191.

It belongs to the IL-17 family. Binds to a heterodimer formed by IL17RA and IL17RE.

The protein localises to the secreted. Functionally, cytokine that plays a crucial role in innate immunity of the epithelium, including to intestinal bacterial pathogens, in an autocrine manner. Stimulates the production of antibacterial peptides and pro-inflammatory molecules for host defense by signaling through the NF-kappa-B and MAPK pathways. Acts synergically with IL22 in inducing the expression of antibacterial peptides, including S100A8, S100A9, REG3A and REG3G. Synergy is also observed with TNF and IL1B in inducing DEFB2 from keratinocytes. Depending on the type of insult, may have both protective and pathogenic properties, either by maintaining epithelial homeostasis after an inflammatory challenge or by promoting inflammatory phenotype. Enhanced IL17C/IL17RE signaling may also lead to greater susceptibility to autoimmune diseases. This chain is Interleukin-17C (IL17C), found in Homo sapiens (Human).